A 523-amino-acid polypeptide reads, in one-letter code: Flavin-dependent halogenase armH5 (523 aa).

Positions 17, 20, and 50 each coordinate FAD. The chloride site is built by Ser328 and Gly329. FAD is bound at residue Val330.

The protein belongs to the flavin-dependent halogenase family.

It carries out the reaction melleolide F + FADH2 + chloride + O2 = 6'-chloromelleolide F + FAD + 2 H2O + H(+). Flavin-dependent halogenase involved in the biosynthesis of melleolides, a range of antifungal and phytotoxic polyketide derivatives composed of an orsellinic acid (OA) moiety esterified to various sesquiterpene alcohols. The halogenase catalyzes the transfer of a single chlorine atom to the melleolide backbone, resulting in a 6'-chloromelleolide product. The enzyme acts on free substrate and does not depend on carrier-protein-dependent acceptor molecules. This Armillaria mellea (Honey mushroom) protein is Flavin-dependent halogenase armH5.